Reading from the N-terminus, the 298-residue chain is GTP cyclohydrolase FolE2 (298 aa).

The protein belongs to the GTP cyclohydrolase IV family.

It catalyses the reaction GTP + H2O = 7,8-dihydroneopterin 3'-triphosphate + formate + H(+). The protein operates within cofactor biosynthesis; 7,8-dihydroneopterin triphosphate biosynthesis; 7,8-dihydroneopterin triphosphate from GTP: step 1/1. Converts GTP to 7,8-dihydroneopterin triphosphate. This is GTP cyclohydrolase FolE2 from Pseudomonas aeruginosa (strain UCBPP-PA14).